The primary structure comprises 182 residues: Inosine/xanthosine triphosphatase (182 aa).

Residues Asp38 and Glu68 each contribute to the Mg(2+) site. 68–69 (EA) contributes to the substrate binding site.

Belongs to the YjjX NTPase family. Homodimer. It depends on Mg(2+) as a cofactor. Mn(2+) is required as a cofactor.

The enzyme catalyses XTP + H2O = XDP + phosphate + H(+). It carries out the reaction ITP + H2O = IDP + phosphate + H(+). Functionally, phosphatase that hydrolyzes non-canonical purine nucleotides such as XTP and ITP to their respective diphosphate derivatives. Probably excludes non-canonical purines from DNA/RNA precursor pool, thus preventing their incorporation into DNA/RNA and avoiding chromosomal lesions. The protein is Inosine/xanthosine triphosphatase of Erwinia tasmaniensis (strain DSM 17950 / CFBP 7177 / CIP 109463 / NCPPB 4357 / Et1/99).